Here is a 191-residue protein sequence, read N- to C-terminus: Ion-translocating oxidoreductase complex subunit B (191 aa).

A hydrophobic region spans residues 1–26; the sequence is MSSLWIAIAAVSAIALVSGLILGFAA. One can recognise a 4Fe-4S domain in the interval 32–90; sequence EADPIVERIDALLPQSQCGQCGYPGCRPYAEAVANGEKINRCAPGGEAVMRNIAALLAV. Residues Cys-49, Cys-52, Cys-57, Cys-73, Cys-116, Cys-119, Cys-122, Cys-126, Cys-146, Cys-149, Cys-152, and Cys-156 each contribute to the [4Fe-4S] cluster site. 4Fe-4S ferredoxin-type domains are found at residues 107 to 136 and 137 to 166; these read QVAL…GATR and ALHT…LVPV.

It belongs to the 4Fe4S bacterial-type ferredoxin family. RnfB subfamily. As to quaternary structure, the complex is composed of six subunits: RnfA, RnfB, RnfC, RnfD, RnfE and RnfG. The cofactor is [4Fe-4S] cluster.

It is found in the cell inner membrane. In terms of biological role, part of a membrane-bound complex that couples electron transfer with translocation of ions across the membrane. This is Ion-translocating oxidoreductase complex subunit B from Edwardsiella ictaluri (strain 93-146).